A 238-amino-acid polypeptide reads, in one-letter code: Small ribosomal subunit protein eS4 (238 aa).

One can recognise an S4 RNA-binding domain in the interval 38–100 (LPLAIVIRDV…TGEVYRVVPD (63 aa)).

Belongs to the eukaryotic ribosomal protein eS4 family.

The polypeptide is Small ribosomal subunit protein eS4 (Pyrobaculum arsenaticum (strain DSM 13514 / JCM 11321 / PZ6)).